We begin with the raw amino-acid sequence, 759 residues long: Protein AKNAD1 (759 aa).

Residues T169–R246 form a disordered region. Over residues S181 to E192 the composition is skewed to polar residues. Positions Q371–S482 form a coiled coil. The span at Y484–V496 shows a compositional bias: polar residues. 4 disordered regions span residues Y484–P543, E634–D654, C678–A723, and P735–Q759. Over residues T497–S509 the composition is skewed to low complexity. Residues S639–D654 are compositionally biased toward polar residues. The segment covering R679–Y688 has biased composition (basic and acidic residues). Over residues P735 to P744 the composition is skewed to polar residues.

It belongs to the AKNA family.

This Macaca fascicularis (Crab-eating macaque) protein is Protein AKNAD1 (AKNAD1).